Consider the following 470-residue polypeptide: Aminodeoxychorismate synthase component 1 (470 aa).

This sequence belongs to the anthranilate synthase component I family. As to quaternary structure, monomer. Heterodimer consisting of two non-identical subunits: a glutamine amidotransferase subunit (PabA) and a aminodeoxychorismate synthase subunit (PabB). Mg(2+) is required as a cofactor.

The enzyme catalyses chorismate + L-glutamine = 4-amino-4-deoxychorismate + L-glutamate. It participates in cofactor biosynthesis; tetrahydrofolate biosynthesis; 4-aminobenzoate from chorismate: step 1/2. Part of a heterodimeric complex that catalyzes the two-step biosynthesis of 4-amino-4-deoxychorismate (ADC), a precursor of p-aminobenzoate (PABA) and tetrahydrofolate. In the first step, a glutamine amidotransferase (PabA) generates ammonia as a substrate that, along with chorismate, is used in the second step, catalyzed by aminodeoxychorismate synthase (PabB) to produce ADC. This is Aminodeoxychorismate synthase component 1 (pabB) from Lactococcus lactis subsp. lactis (Streptococcus lactis).